Consider the following 602-residue polypeptide: Probable translation initiation factor IF-2 (602 aa).

Residues 18 to 233 (LRTPIVCVMG…LVGLAQRFLK (216 aa)) enclose the tr-type G domain. Positions 27–34 (GHVDHGKT) are G1. 27–34 (GHVDHGKT) serves as a coordination point for GTP. The interval 52 to 56 (AITQH) is G2. Residues 88 to 91 (DTPG) are G3. GTP is bound by residues 88–92 (DTPGH) and 142–145 (NKID). A G4 region spans residues 142-145 (NKID). Positions 210 to 212 (SAI) are G5.

The protein belongs to the TRAFAC class translation factor GTPase superfamily. Classic translation factor GTPase family. IF-2 subfamily.

Functionally, function in general translation initiation by promoting the binding of the formylmethionine-tRNA to ribosomes. Seems to function along with eIF-2. In Methanothrix thermoacetophila (strain DSM 6194 / JCM 14653 / NBRC 101360 / PT) (Methanosaeta thermophila), this protein is Probable translation initiation factor IF-2.